Reading from the N-terminus, the 101-residue chain is Pore-forming peptide amoebapore C (101 aa).

The signal sequence occupies residues 1–24 (MKLFVLLCVFVLCLASQEKQQDRE). The 77-residue stretch at 25 to 101 (IPVLCPVCTS…KLICGLIHAC (77 aa)) folds into the Saposin B-type domain. Disulfide bonds link Cys29–Cys101, Cys32–Cys95, and Cys59–Cys70.

As to quaternary structure, monomer. Homodimer. Hexamer; formed during insertion in the membrane.

The protein localises to the cytoplasmic granule. Its function is as follows. Forms pores in the cell membrane of host cells. Has antibacterial activity against M.luteus, no activity against E.coli. Implicated in the cytolytic activity of the parasite. In Entamoeba histolytica (strain ATCC 30459 / HM-1:IMSS / ABRM), this protein is Pore-forming peptide amoebapore C.